A 285-amino-acid chain; its full sequence is MNSLFVGRPIVKSSYNVYTLPSSICGGHFFKVSNSLSLYDDHRRTRIEIIRNSELIPKHVAIIMDGNRRWAKARGLPVQEGHKFLAPNLKNICNISSKLGIQVITAFAFSTENWNRSSEEVDFLMRLFEEFFEEFMRLGVRVSLIGGKSKLPTKLQQVIELTEEVTKSNEGLHLMMALNYGGQYDMLQATKNIASKVKDGLIKLEDIDYTLFEQELTTKCAKFPKPDLLIRTGGEQRISNFLLWQLAYSELYFTNTLFPDFGEEALMDAIFSFQRRHRRFGGHTY.

A chloroplast-targeting transit peptide spans Met-1 to Phe-30. Residue Asp-65 is part of the active site.

It belongs to the UPP synthase family. Mg(2+) serves as cofactor. Expressed in roots and red fruits.

The protein resides in the plastid. Its subcellular location is the chloroplast. The enzyme catalyses 2 isopentenyl diphosphate + dimethylallyl diphosphate = (2Z,6Z)-farnesyl diphosphate + 2 diphosphate. It catalyses the reaction isopentenyl diphosphate + dimethylallyl diphosphate = neryl diphosphate + diphosphate. It carries out the reaction neryl diphosphate + isopentenyl diphosphate = (2Z,6Z)-farnesyl diphosphate + diphosphate. Its function is as follows. Uses neryl diphosphate to catalyze the cis-prenyl chain elongation and produce the 15 carbon product (2Z,6Z)-farnesyl diphosphate. The sequence is that of (2Z,6Z)-farnesyl diphosphate synthase CPT6, chloroplastic from Solanum lycopersicum (Tomato).